The following is a 1437-amino-acid chain: Gag-Pol polyprotein (1437 aa).

Residue Gly-2 is the site of N-myristoyl glycine; by host attachment. Residues 7 to 31 form an interaction with Gp41 region; it reads VLSGGELDKWEKIRLRPGGKKKYKL. Residues 8 to 43 form an interaction with host CALM1 region; sequence LSGGELDKWEKIRLRPGGKKKYKLKHIVWASRELER. The tract at residues 12–19 is interaction with host AP3D1; it reads ELDKWEKI. The segment at 14–33 is interaction with membrane phosphatidylinositol 4,5-bisphosphate and RNA; that stretch reads DKWEKIRLRPGGKKKYKLKH. A Nuclear export signal motif is present at residues 16–22; the sequence is WEKIRLR. Residues 26–32 carry the Nuclear localization signal motif; the sequence is KKKYKLK. Positions 73 to 77 are interaction with membrane phosphatidylinositol 4,5-bisphosphate; the sequence is EELRS. Residues 106–129 form a disordered region; it reads EEQNKSKKKAQQAAAAAGTGNSSQ. Tyr-134 carries the post-translational modification Phosphotyrosine; by host. Positions 191–229 are interaction with human PPIA/CYPA and NUP153; it reads NTVGGHQAAMQMLKETINEEAAEWDRVHPVHAGPIAPGQ. The segment at 279 to 365 is dimerization/Multimerization of capsid protein p24; it reads YSPTSILDIR…GGPGHKARVL (87 aa). 2 consecutive CCHC-type zinc fingers follow at residues 392–409 and 413–430; these read VKCFNCGKEGHIAKNCRA and KGCWRCGREGHQMKDCTE. The tract at residues 491–495 is dimerization of protease; it reads PQITL. The 70-residue stretch at 510–579 folds into the Peptidase A2 domain; the sequence is KEALLDTGAD…TPVNIIGRNL (70 aa). The For protease activity; shared with dimeric partner role is filled by Asp-515. Dimerization of protease stretches follow at residues 539-545 and 578-590; these read GIGGFIK and NLLTQIGCTLNFP. One can recognise a Reverse transcriptase domain in the interval 633–823; sequence EGKISKIGPE…PPFLWMGYEL (191 aa). Positions 699, 774, and 775 each coordinate Mg(2+). Residues 816-824 form an RT 'primer grip' region; sequence FLWMGYELH. The Tryptophan repeat motif signature appears at 987-1003; sequence WEAWWMEYWQATWIPEW. The RNase H type-1 domain maps to 1023 to 1146; sequence IVGAETFYVD…VDKLVSAGIR (124 aa). Mg(2+) is bound by residues Asp-1032, Glu-1067, Asp-1087, and Asp-1138. An Integrase-type zinc finger spans residues 1152 to 1193; sequence NGIDKAQEEHEKYHSNWRAMASDFNLPPVVAKEIVASCDKCQ. Positions 1161, 1165, 1189, and 1192 each coordinate Zn(2+). One can recognise an Integrase catalytic domain in the interval 1203-1353; sequence VDCSPGIWQL…SAGERIVDII (151 aa). Mg(2+)-binding residues include Asp-1213, Asp-1265, and Glu-1301. The integrase-type DNA-binding region spans 1372 to 1419; it reads FRVYYRDNKDPLWKGPAKLLWKGEGAVVIQDNSDIKVVPRRKAKIIRD.

In terms of assembly, homotrimer; further assembles as hexamers of trimers. Interacts with gp41 (via C-terminus). Interacts with host CALM1; this interaction induces a conformational change in the Matrix protein, triggering exposure of the myristate group. Interacts with host AP3D1; this interaction allows the polyprotein trafficking to multivesicular bodies during virus assembly. Part of the pre-integration complex (PIC) which is composed of viral genome, matrix protein, Vpr and integrase. Homodimer; the homodimer further multimerizes as homohexamers or homopentamers. Interacts with human PPIA/CYPA; This interaction stabilizes the capsid. Interacts with human NUP153. Interacts with host PDZD8; this interaction stabilizes the capsid. Interacts with monkey TRIM5; this interaction destabilizes the capsid. As to quaternary structure, homodimer, whose active site consists of two apposed aspartic acid residues. In terms of assembly, heterodimer of p66 RT and p51 RT (RT p66/p51). Heterodimerization of RT is essential for DNA polymerase activity. The overall folding of the subdomains is similar in p66 RT and p51 RT but the spatial arrangements of the subdomains are dramatically different. Homotetramer; may further associate as a homohexadecamer. Part of the pre-integration complex (PIC) which is composed of viral genome, matrix protein, Vpr and integrase. Interacts with human SMARCB1/INI1 and human PSIP1/LEDGF isoform 1. Interacts with human KPNA3; this interaction might play a role in nuclear import of the pre-integration complex. Interacts with human NUP153; this interaction might play a role in nuclear import of the pre-integration complex. Requires Mg(2+) as cofactor. Post-translationally, specific enzymatic cleavages by the viral protease yield mature proteins. The protease is released by autocatalytic cleavage. The polyprotein is cleaved during and after budding, this process is termed maturation. Proteolytic cleavage of p66 RT removes the RNase H domain to yield the p51 RT subunit. Nucleocapsid protein p7 might be further cleaved after virus entry. In terms of processing, tyrosine phosphorylated presumably in the virion by a host kinase. Phosphorylation is apparently not a major regulator of membrane association. Phosphorylated possibly by host MAPK1; this phosphorylation is necessary for Pin1-mediated virion uncoating. Post-translationally, methylated by host PRMT6, impairing its function by reducing RNA annealing and the initiation of reverse transcription.

The protein localises to the host cell membrane. It localises to the host endosome. Its subcellular location is the host multivesicular body. It is found in the virion membrane. The protein resides in the host nucleus. The protein localises to the host cytoplasm. It localises to the virion. It carries out the reaction Specific for a P1 residue that is hydrophobic, and P1' variable, but often Pro.. The catalysed reaction is Endohydrolysis of RNA in RNA/DNA hybrids. Three different cleavage modes: 1. sequence-specific internal cleavage of RNA. Human immunodeficiency virus type 1 and Moloney murine leukemia virus enzymes prefer to cleave the RNA strand one nucleotide away from the RNA-DNA junction. 2. RNA 5'-end directed cleavage 13-19 nucleotides from the RNA end. 3. DNA 3'-end directed cleavage 15-20 nucleotides away from the primer terminus.. The enzyme catalyses 3'-end directed exonucleolytic cleavage of viral RNA-DNA hybrid.. It catalyses the reaction DNA(n) + a 2'-deoxyribonucleoside 5'-triphosphate = DNA(n+1) + diphosphate. Protease: The viral protease is inhibited by many synthetic protease inhibitors (PIs), such as amprenavir, atazanavir, indinavir, loprinavir, nelfinavir, ritonavir and saquinavir. Use of protease inhibitors in tritherapy regimens permit more ambitious therapeutic strategies. Reverse transcriptase/ribonuclease H: RT can be inhibited either by nucleoside RT inhibitors (NRTIs) or by non nucleoside RT inhibitors (NNRTIs). NRTIs act as chain terminators, whereas NNRTIs inhibit DNA polymerization by binding a small hydrophobic pocket near the RT active site and inducing an allosteric change in this region. Classical NRTIs are abacavir, adefovir (PMEA), didanosine (ddI), lamivudine (3TC), stavudine (d4T), tenofovir (PMPA), zalcitabine (ddC), and zidovudine (AZT). Classical NNRTIs are atevirdine (BHAP U-87201E), delavirdine, efavirenz (DMP-266), emivirine (I-EBU), and nevirapine (BI-RG-587). The tritherapies used as a basic effective treatment of AIDS associate two NRTIs and one NNRTI. Its function is as follows. Mediates, with Gag polyprotein, the essential events in virion assembly, including binding the plasma membrane, making the protein-protein interactions necessary to create spherical particles, recruiting the viral Env proteins, and packaging the genomic RNA via direct interactions with the RNA packaging sequence (Psi). Gag-Pol polyprotein may regulate its own translation, by the binding genomic RNA in the 5'-UTR. At low concentration, the polyprotein would promote translation, whereas at high concentration, the polyprotein would encapsidate genomic RNA and then shut off translation. In terms of biological role, targets the polyprotein to the plasma membrane via a multipartite membrane-binding signal, that includes its myristoylated N-terminus. Matrix protein is part of the pre-integration complex. Implicated in the release from host cell mediated by Vpu. Binds to RNA. Forms the conical core that encapsulates the genomic RNA-nucleocapsid complex in the virion. Most core are conical, with only 7% tubular. The core is constituted by capsid protein hexamer subunits. The core is disassembled soon after virion entry. Host restriction factors such as TRIM5-alpha or TRIMCyp bind retroviral capsids and cause premature capsid disassembly, leading to blocks in reverse transcription. Capsid restriction by TRIM5 is one of the factors which restricts HIV-1 to the human species. Host PIN1 apparently facilitates the virion uncoating. On the other hand, interactions with PDZD8 or CYPA stabilize the capsid. Functionally, encapsulates and protects viral dimeric unspliced genomic RNA (gRNA). Binds these RNAs through its zinc fingers. Acts as a nucleic acid chaperone which is involved in rearangement of nucleic acid secondary structure during gRNA retrotranscription. Also facilitates template switch leading to recombination. As part of the polyprotein, participates in gRNA dimerization, packaging, tRNA incorporation and virion assembly. Its function is as follows. Aspartyl protease that mediates proteolytic cleavages of Gag and Gag-Pol polyproteins during or shortly after the release of the virion from the plasma membrane. Cleavages take place as an ordered, step-wise cascade to yield mature proteins. This process is called maturation. Displays maximal activity during the budding process just prior to particle release from the cell. Also cleaves Nef and Vif, probably concomitantly with viral structural proteins on maturation of virus particles. Hydrolyzes host EIF4GI and PABP1 in order to shut off the capped cellular mRNA translation. The resulting inhibition of cellular protein synthesis serves to ensure maximal viral gene expression and to evade host immune response. Also mediates cleavage of host YTHDF3. Mediates cleavage of host CARD8, thereby activating the CARD8 inflammasome, leading to the clearance of latent HIV-1 in patient CD4(+) T-cells after viral reactivation; in contrast, HIV-1 can evade CARD8-sensing when its protease remains inactive in infected cells prior to viral budding. In terms of biological role, multifunctional enzyme that converts the viral RNA genome into dsDNA in the cytoplasm, shortly after virus entry into the cell. This enzyme displays a DNA polymerase activity that can copy either DNA or RNA templates, and a ribonuclease H (RNase H) activity that cleaves the RNA strand of RNA-DNA heteroduplexes in a partially processive 3' to 5' endonucleasic mode. Conversion of viral genomic RNA into dsDNA requires many steps. A tRNA(3)-Lys binds to the primer-binding site (PBS) situated at the 5'-end of the viral RNA. RT uses the 3' end of the tRNA primer to perform a short round of RNA-dependent minus-strand DNA synthesis. The reading proceeds through the U5 region and ends after the repeated (R) region which is present at both ends of viral RNA. The portion of the RNA-DNA heteroduplex is digested by the RNase H, resulting in a ssDNA product attached to the tRNA primer. This ssDNA/tRNA hybridizes with the identical R region situated at the 3' end of viral RNA. This template exchange, known as minus-strand DNA strong stop transfer, can be either intra- or intermolecular. RT uses the 3' end of this newly synthesized short ssDNA to perform the RNA-dependent minus-strand DNA synthesis of the whole template. RNase H digests the RNA template except for two polypurine tracts (PPTs) situated at the 5'-end and near the center of the genome. It is not clear if both polymerase and RNase H activities are simultaneous. RNase H probably can proceed both in a polymerase-dependent (RNA cut into small fragments by the same RT performing DNA synthesis) and a polymerase-independent mode (cleavage of remaining RNA fragments by free RTs). Secondly, RT performs DNA-directed plus-strand DNA synthesis using the PPTs that have not been removed by RNase H as primers. PPTs and tRNA primers are then removed by RNase H. The 3' and 5' ssDNA PBS regions hybridize to form a circular dsDNA intermediate. Strand displacement synthesis by RT to the PBS and PPT ends produces a blunt ended, linear dsDNA copy of the viral genome that includes long terminal repeats (LTRs) at both ends. Catalyzes viral DNA integration into the host chromosome, by performing a series of DNA cutting and joining reactions. This enzyme activity takes place after virion entry into a cell and reverse transcription of the RNA genome in dsDNA. The first step in the integration process is 3' processing. This step requires a complex comprising the viral genome, matrix protein, Vpr and integrase. This complex is called the pre-integration complex (PIC). The integrase protein removes 2 nucleotides from each 3' end of the viral DNA, leaving recessed CA OH's at the 3' ends. In the second step, the PIC enters cell nucleus. This process is mediated through integrase and Vpr proteins, and allows the virus to infect a non dividing cell. This ability to enter the nucleus is specific of lentiviruses, other retroviruses cannot and rely on cell division to access cell chromosomes. In the third step, termed strand transfer, the integrase protein joins the previously processed 3' ends to the 5' ends of strands of target cellular DNA at the site of integration. The 5'-ends are produced by integrase-catalyzed staggered cuts, 5 bp apart. A Y-shaped, gapped, recombination intermediate results, with the 5'-ends of the viral DNA strands and the 3' ends of target DNA strands remaining unjoined, flanking a gap of 5 bp. The last step is viral DNA integration into host chromosome. This involves host DNA repair synthesis in which the 5 bp gaps between the unjoined strands are filled in and then ligated. Since this process occurs at both cuts flanking the HIV genome, a 5 bp duplication of host DNA is produced at the ends of HIV-1 integration. Alternatively, Integrase may catalyze the excision of viral DNA just after strand transfer, this is termed disintegration. This chain is Gag-Pol polyprotein (gag-pol), found in Human immunodeficiency virus type 1 group M subtype B (isolate ARV2/SF2) (HIV-1).